The sequence spans 574 residues: Sulfate adenylyltransferase (574 aa).

The interval 1-169 (MSNPPHGGVL…VEAINKLNHY (169 aa)) is N-terminal. The tract at residues 170–394 (DYVALRYTPA…LRESSRPRST (225 aa)) is catalytic. Gln-197 serves as a coordination point for sulfate. ATP contacts are provided by residues 197–200 (QTRN) and 291–294 (GRDH). Catalysis depends on residues Thr-198, Arg-199, and Asn-200. Arg-199 lines the sulfate pocket. Ala-295 contributes to the sulfate binding site. Val-333 lines the ATP pocket. The tract at residues 395-574 (QGFTIFLTGY…LETEGFFDRA (180 aa)) is allosteric regulation domain; adenylyl-sulfate kinase-like. Residues 434–437 (DTVR), Arg-451, 477–478 (IA), and Arg-516 each bind 3'-phosphoadenylyl sulfate.

It in the N-terminal section; belongs to the sulfate adenylyltransferase family. This sequence in the C-terminal section; belongs to the APS kinase family. In terms of assembly, homohexamer. Dimer of trimers.

The protein resides in the cytoplasm. It catalyses the reaction sulfate + ATP + H(+) = adenosine 5'-phosphosulfate + diphosphate. The protein operates within sulfur metabolism; hydrogen sulfide biosynthesis; sulfite from sulfate: step 1/3. With respect to regulation, allosterically inhibited by 3'-phosphoadenosine 5'-phosphosulfate (PAPS). Catalyzes the first intracellular reaction of sulfate assimilation, forming adenosine-5'-phosphosulfate (APS) from inorganic sulfate and ATP. Plays an important role in sulfate activation as a component of the biosynthesis pathway of sulfur-containing amino acids. This Aspergillus clavatus (strain ATCC 1007 / CBS 513.65 / DSM 816 / NCTC 3887 / NRRL 1 / QM 1276 / 107) protein is Sulfate adenylyltransferase.